Here is a 254-residue protein sequence, read N- to C-terminus: Low affinity immunoglobulin gamma Fc region receptor III-A (254 aa).

The signal sequence occupies residues Met1–Ala20. Residues Ala21–Gln209 lie on the Extracellular side of the membrane. 2 Ig-like C2-type domains span residues Pro23–Gln104 and Lys121–Arg174. Asn42, Asn63, Asn166, and Asn181 each carry an N-linked (GlcNAc...) asparagine glycan. Disulfide bonds link Cys47–Cys90 and Cys129–Cys173. The chain crosses the membrane as a helical span at residues Ile210 to Val230. The Cytoplasmic segment spans residues Arg231–Lys254.

In terms of assembly, forms a heterooligomeric complex with ITAM-containing signaling subunits FCER1G. Interacts (via transmembrane domain) with signaling subunits; this interaction is a prerequisite for receptor complex expression on the cell surface and intracellular signal transduction. Binds the Fc region of antigen-complexed IgG. In terms of processing, N-glycosylated. Phosphorylated following receptor ligation.

It localises to the cell membrane. In terms of biological role, receptor for the invariable Fc fragment of immunoglobulin gamma (IgG). Binds with intermediate affinity to both IgG2a and IgG2b. Can bind to IgG2a and IgG2b monomers. Does not display binding to IgG1 or IgG3. Recognizes neutralizing virus-specific IgGs displayed on the cell surface of infected cells and triggers antibody-dependent cellular cytotoxicity (ADCC). Confers protection to lethal influenza virus infection. On splenic dendritic cells, uptakes antigen immune complexes and efficiently divert them into MHC class I and II antigen presentation pathways to provide for superior priming of CD4-positive and CD8-positive T cell immune responses. Mediates neutrophil activation by IgG complexes redundantly with FCGR2A. Plays a role in promoting bone resorption by enhancing osteoclast differentiation following binding to IgG2a. Also acts as a receptor for the Fc region of immunoglobulin epsilon (IgE). Binds with low affinity to both the a and b allotypes of IgE. Has also been shown to bind to IgE allotype a only but not to allotype b. Binds aggregated IgE but not the monomeric form and bound monomeric IgG is readily displaced by IgE complexes. Binding to IgE promotes macrophage-mediated phagocytosis, antigen presentation to T cells, production of pro-inflammatory cytokines and the late phase of cutaneous allergic reactions. Mediates enhanced ADCC in response to afucosylated IgGs. The polypeptide is Low affinity immunoglobulin gamma Fc region receptor III-A (Cavia porcellus (Guinea pig)).